A 40-amino-acid polypeptide reads, in one-letter code: Photosystem II reaction center protein L (40 aa).

Residues serine 19–phenylalanine 39 traverse the membrane as a helical segment.

This sequence belongs to the PsbL family. As to quaternary structure, PSII is composed of 1 copy each of membrane proteins PsbA, PsbB, PsbC, PsbD, PsbE, PsbF, PsbH, PsbI, PsbJ, PsbK, PsbL, PsbM, PsbT, PsbX, PsbY, PsbZ, Psb30/Ycf12, at least 3 peripheral proteins of the oxygen-evolving complex and a large number of cofactors. It forms dimeric complexes.

It localises to the plastid. The protein resides in the chloroplast thylakoid membrane. Functionally, one of the components of the core complex of photosystem II (PSII). PSII is a light-driven water:plastoquinone oxidoreductase that uses light energy to abstract electrons from H(2)O, generating O(2) and a proton gradient subsequently used for ATP formation. It consists of a core antenna complex that captures photons, and an electron transfer chain that converts photonic excitation into a charge separation. This subunit is found at the monomer-monomer interface and is required for correct PSII assembly and/or dimerization. The sequence is that of Photosystem II reaction center protein L from Nandina domestica (Heavenly bamboo).